Here is a 138-residue protein sequence, read N- to C-terminus: MALLPDKEKLLRNFLRCANWEEKYLYIIELGQRLPELRDEDRSPQNSIQGCQSQVWIVMRQNAQGIIELQGDSDAAIVKGLIAVVFILYDQMTPQDIVNFDVRPWFEKMALTQHLTPSRSQGLEAMIRAIRAKAAALS.

The active-site Cysteine persulfide intermediate is the C51.

It belongs to the SufE family. Homodimer. Interacts with SufS.

Its subcellular location is the cytoplasm. It functions in the pathway cofactor biosynthesis; iron-sulfur cluster biosynthesis. Functionally, participates in cysteine desulfuration mediated by SufS. Cysteine desulfuration mobilizes sulfur from L-cysteine to yield L-alanine and constitutes an essential step in sulfur metabolism for biosynthesis of a variety of sulfur-containing biomolecules. Functions as a sulfur acceptor for SufS, by mediating the direct transfer of the sulfur atom from the S-sulfanylcysteine of SufS, an intermediate product of cysteine desulfuration process. The sequence is that of Cysteine desulfuration protein SufE from Escherichia coli (strain K12 / MC4100 / BW2952).